An 85-amino-acid chain; its full sequence is Oxytocin-neurophysin 1 (85 aa).

Position 3 is a glycine amide (Gly-3). 6 cysteine pairs are disulfide-bonded: Cys-16–Cys-60, Cys-19–Cys-33, Cys-27–Cys-50, Cys-34–Cys-40, Cys-67–Cys-79, and Cys-80–Cys-85.

Belongs to the vasopressin/oxytocin family. Interacts with oxytocin receptor (Ki=1.5 nM). Interacts with vasopressin V1aR/AVPR1A (Ki=37 nM), V1bR/AVPR1B (Ki=222 nM), and V2R/AVPR2 receptors (Ki=823 nM).

Its function is as follows. Neurophysin 1 specifically binds oxytocin. Oxytocin causes contraction of the smooth muscle of the uterus and of the mammary gland. Acts by binding to oxytocin receptor (OXTR). The protein is Oxytocin-neurophysin 1 (OXT) of Papio hamadryas (Hamadryas baboon).